Consider the following 727-residue polypeptide: Glucans biosynthesis glucosyltransferase H (727 aa).

Residues S18–E38 are disordered. 7 helical membrane-spanning segments follow: residues F58–V78, V97–L117, L278–V298, I408–A428, L460–L480, I496–I516, and L572–W592.

It belongs to the glycosyltransferase 2 family. OpgH subfamily.

It localises to the cell inner membrane. Its pathway is glycan metabolism; osmoregulated periplasmic glucan (OPG) biosynthesis. Its function is as follows. Involved in the biosynthesis of osmoregulated periplasmic glucans (OPGs). The sequence is that of Glucans biosynthesis glucosyltransferase H from Shewanella baltica (strain OS223).